The following is a 476-amino-acid chain: Serine/threonine-protein kinase Chk1 (476 aa).

The interval Met-1–Tyr-265 is interaction with CLSPN. The Protein kinase domain maps to Trp-9 to Tyr-265. Residues Leu-15 to Val-23 and Lys-38 contribute to the ATP site. Asp-130 (proton acceptor) is an active-site residue. A Glycyl lysine isopeptide (Lys-Gly) (interchain with G-Cter in ubiquitin) cross-link involves residue Lys-132. Positions Lys-270–Leu-327 are disordered. Phosphoserine occurs at positions 280, 286, 296, and 301. The span at Gly-281 to Glu-320 shows a compositional bias: polar residues. Residue Ser-317 is modified to Phosphoserine; by ATM and ATR. Position 331 is a phosphoserine (Ser-331). Residue Ser-345 is modified to Phosphoserine; by ATM and ATR. The segment at Gln-391–Thr-476 is autoinhibitory region. A Glycyl lysine isopeptide (Lys-Gly) (interchain with G-Cter in ubiquitin) cross-link involves residue Lys-436. 2 positions are modified to phosphoserine: Ser-467 and Ser-468.

It belongs to the protein kinase superfamily. CAMK Ser/Thr protein kinase family. NIM1 subfamily. Interacts (phosphorylated by ATR) with RAD51. Interacts with and phosphorylates CLSPN, an adapter protein that regulates the ATR-dependent phosphorylation of CHEK1. Interacts with BRCA1. Interacts with and phosphorylates CDC25A, CDC25B and CDC25C. Interacts with FBXO6, which regulates CHEK1. Interacts with PPM1D, which regulates CHEK1 through dephosphorylation. Interacts with TIMELESS; DNA damage-dependent. Interacts with FEM1B; activates CHEK1 in response to stress. Interacts with TLK1. Interacts with XPO1 and YWHAZ. Interacts with CDK5RAP3; antagonizes CHEK1. In terms of assembly, isoform 1 associates with isoform 2, the interaction is disrupted upon phosphorylation by ATR. Phosphorylated by ATR in a RAD17-dependent manner in response to ultraviolet irradiation and inhibition of DNA replication. Phosphorylated by ATM in response to ionizing irradiation. ATM and ATR can both phosphorylate Ser-317 and Ser-345 and this results in enhanced kinase activity. Phosphorylation at Ser-345 induces a change in the conformation of the protein, activates the kinase activity and is a prerequisite for interaction with FBXO6 and subsequent ubiquitination at Lys-436. Phosphorylation at Ser-345 also increases binding to 14-3-3 proteins and promotes nuclear retention. Conversely, dephosphorylation at Ser-345 by PPM1D may contribute to exit from checkpoint mediated cell cycle arrest. Phosphorylation at Ser-280 by AKT1/PKB, may promote mono and/or diubiquitination. Also phosphorylated at undefined residues during mitotic arrest, resulting in decreased activity. In terms of processing, ubiquitinated. Mono or diubiquitination promotes nuclear exclusion. The activated form (phosphorylated on Ser-345) is polyubiquitinated at Lys-436 by some SCF-type E3 ubiquitin ligase complex containing FBXO6 promoting its degradation. Ubiquitination and degradation are required to terminate the checkpoint and ensure that activated CHEK1 does not accumulate as cells progress through S phase, when replication forks encounter transient impediments during normal DNA replication. 'Lys-63'-mediated ubiquitination by TRAF4 at Lys-132 activates cell cycle arrest and activation of DNA repair. Post-translationally, proteolytically cleaved at the C-terminus by SPRTN during normal DNA replication, thereby promoting CHEK1 removal from chromatin and activating the protein kinase activity. In terms of tissue distribution, expressed ubiquitously with the most abundant expression in thymus, testis, small intestine and colon.

The protein localises to the nucleus. The protein resides in the chromosome. It localises to the cytoplasm. It is found in the cytoskeleton. Its subcellular location is the microtubule organizing center. The protein localises to the centrosome. It carries out the reaction L-seryl-[protein] + ATP = O-phospho-L-seryl-[protein] + ADP + H(+). It catalyses the reaction L-threonyl-[protein] + ATP = O-phospho-L-threonyl-[protein] + ADP + H(+). Its activity is regulated as follows. Activated through phosphorylation predominantly by ATR but also by ATM in response to DNA damage or inhibition of DNA replication. Activation is modulated by several mediators including CLSPN, BRCA1 and FEM1B. Proteolytic cleavage at the C-terminus by SPRTN during normal DNA replication activates the protein kinase activity. Serine/threonine-protein kinase which is required for checkpoint-mediated cell cycle arrest and activation of DNA repair in response to the presence of DNA damage or unreplicated DNA. May also negatively regulate cell cycle progression during unperturbed cell cycles. This regulation is achieved by a number of mechanisms that together help to preserve the integrity of the genome. Recognizes the substrate consensus sequence [R-X-X-S/T]. Binds to and phosphorylates CDC25A, CDC25B and CDC25C. Phosphorylation of CDC25A at 'Ser-178' and 'Thr-507' and phosphorylation of CDC25C at 'Ser-216' creates binding sites for 14-3-3 proteins which inhibit CDC25A and CDC25C. Phosphorylation of CDC25A at 'Ser-76', 'Ser-124', 'Ser-178', 'Ser-279' and 'Ser-293' promotes proteolysis of CDC25A. Phosphorylation of CDC25A at 'Ser-76' primes the protein for subsequent phosphorylation at 'Ser-79', 'Ser-82' and 'Ser-88' by NEK11, which is required for polyubiquitination and degradation of CDCD25A. Inhibition of CDC25 leads to increased inhibitory tyrosine phosphorylation of CDK-cyclin complexes and blocks cell cycle progression. Also phosphorylates NEK6. Binds to and phosphorylates RAD51 at 'Thr-309', which promotes the release of RAD51 from BRCA2 and enhances the association of RAD51 with chromatin, thereby promoting DNA repair by homologous recombination. Phosphorylates multiple sites within the C-terminus of TP53, which promotes activation of TP53 by acetylation and promotes cell cycle arrest and suppression of cellular proliferation. Also promotes repair of DNA cross-links through phosphorylation of FANCE. Binds to and phosphorylates TLK1 at 'Ser-743', which prevents the TLK1-dependent phosphorylation of the chromatin assembly factor ASF1A. This may enhance chromatin assembly both in the presence or absence of DNA damage. May also play a role in replication fork maintenance through regulation of PCNA. May regulate the transcription of genes that regulate cell-cycle progression through the phosphorylation of histones. Phosphorylates histone H3.1 (to form H3T11ph), which leads to epigenetic inhibition of a subset of genes. May also phosphorylate RB1 to promote its interaction with the E2F family of transcription factors and subsequent cell cycle arrest. Phosphorylates SPRTN, promoting SPRTN recruitment to chromatin. Reduces replication stress and activates the G2/M checkpoint, by phosphorylating and inactivating PABIR1/FAM122A and promoting the serine/threonine-protein phosphatase 2A-mediated dephosphorylation and stabilization of WEE1 levels and activity. Its function is as follows. Endogenous repressor of isoform 1, interacts with, and antagonizes CHK1 to promote the S to G2/M phase transition. This chain is Serine/threonine-protein kinase Chk1 (CHEK1), found in Homo sapiens (Human).